Reading from the N-terminus, the 255-residue chain is 4-hydroxy-tetrahydrodipicolinate reductase (255 aa).

NAD(+) contacts are provided by residues 8–13, 89–91, and 114–117; these read GASGRM, GTT, and SSNY. The Proton donor/acceptor role is filled by His146. His147 lines the (S)-2,3,4,5-tetrahydrodipicolinate pocket. The active-site Proton donor is the Lys150. (S)-2,3,4,5-tetrahydrodipicolinate is bound at residue 156 to 157; sequence GT.

The protein belongs to the DapB family.

Its subcellular location is the cytoplasm. It carries out the reaction (S)-2,3,4,5-tetrahydrodipicolinate + NAD(+) + H2O = (2S,4S)-4-hydroxy-2,3,4,5-tetrahydrodipicolinate + NADH + H(+). The catalysed reaction is (S)-2,3,4,5-tetrahydrodipicolinate + NADP(+) + H2O = (2S,4S)-4-hydroxy-2,3,4,5-tetrahydrodipicolinate + NADPH + H(+). Its pathway is amino-acid biosynthesis; L-lysine biosynthesis via DAP pathway; (S)-tetrahydrodipicolinate from L-aspartate: step 4/4. In terms of biological role, catalyzes the conversion of 4-hydroxy-tetrahydrodipicolinate (HTPA) to tetrahydrodipicolinate. This chain is 4-hydroxy-tetrahydrodipicolinate reductase, found in Methanoregula boonei (strain DSM 21154 / JCM 14090 / 6A8).